Here is a 292-residue protein sequence, read N- to C-terminus: AhcY transcriptional activator HvrB (292 aa).

The HTH lysR-type domain maps to P10–T67. A DNA-binding region (H-T-H motif) is located at residues F27 to R46.

It belongs to the LysR transcriptional regulatory family.

Functionally, functions as a low-light activator of ahcY expression (gene for S-adenosyl-L-homocysteine hydrolase) and as a high-light activator of an uncharacterized 21.6 kDa protein in the ahcY-hvrB intergenic region (orf5). It is also a negative regulator of its own expression. The sequence is that of AhcY transcriptional activator HvrB (hvrB) from Rhodobacter capsulatus (strain ATCC BAA-309 / NBRC 16581 / SB1003).